Here is a 470-residue protein sequence, read N- to C-terminus: 6-phospho-beta-galactosidase (470 aa).

Residues Gln19, His116, Asn159, Glu160, and Asn297 each contribute to the D-galactose 6-phosphate site. Glu160 acts as the Proton donor in catalysis. The active-site Nucleophile is the Glu375. D-galactose 6-phosphate contacts are provided by Ser430, Trp431, Lys437, and Tyr439.

Belongs to the glycosyl hydrolase 1 family.

The catalysed reaction is a 6-phospho-beta-D-galactoside + H2O = D-galactose 6-phosphate + an alcohol. It functions in the pathway carbohydrate metabolism; lactose degradation; D-galactose 6-phosphate and beta-D-glucose from lactose 6-phosphate: step 1/1. This chain is 6-phospho-beta-galactosidase, found in Staphylococcus aureus (strain Mu3 / ATCC 700698).